The following is a 476-amino-acid chain: Sulfite exporter TauE/SafE family protein 3 (476 aa).

Transmembrane regions (helical) follow at residues 8–28 (WLGLRSVTIFLINFSLAFAFV), 76–92 (FNWQIVLGTLVGFFGAA), 99–115 (VGGGGIFVPMLSLIIGF), 120–142 (ATAISKCMIMGASVSTVYYNLRL), 151–171 (IIDYDLALLIQPMLMLGISIG), 172–192 (VAFNVIFPDWLVTVLLIVLFL), 257–277 (VYWKELGLLVFVWIVFLALQI), 291–311 (VINLLQIPVAVGVSGYEAVAL), 339–359 (FGIIAGIVGGLLGLGGGFIMG), 360–380 (PLFLELGVPPQVSSATATFAM), 397–417 (FPVPYALYLVGVATIAAWVGQ), and 433–453 (IIFILASMIFISAISLGGVGI).

The protein belongs to the 4-toluene sulfonate uptake permease (TSUP) (TC 2.A.102) family.

The protein localises to the membrane. The polypeptide is Sulfite exporter TauE/SafE family protein 3 (Arabidopsis thaliana (Mouse-ear cress)).